The sequence spans 243 residues: Transcription factor A, mitochondrial (243 aa).

The transit peptide at 1-42 directs the protein to the mitochondrion; sequence MALFRGMWSVLKALGRTGVEMCAGCGGRIPSSISLVCIPKCF. The segment at residues 49 to 117 is a DNA-binding region (HMG box 1); it reads PKKPMSSYLR…AYKEAVSKYK (69 aa). Ser-54, Ser-55, and Ser-60 each carry phosphoserine; by PKA. Lys-66 carries the N6-succinyllysine modification. A Phosphothreonine modification is found at Thr-121. Residues 154–218 constitute a DNA-binding region (HMG box 2); sequence PKRPRSAYNI…RYDNEMKSWE (65 aa). A Phosphoserine; by PKA modification is found at Ser-159. Ser-192 is modified (phosphoserine).

In terms of assembly, monomer; binds DNA as a monomer. Homodimer. Component of the mitochondrial transcription initiation complex, composed at least of TFB2M, TFAM and POLRMT. In this complex TFAM recruits POLRMT to the promoter whereas TFB2M induces structural changes in POLRMT to enable promoter opening and trapping of the DNA non-template strand. Upon metabolic stress, forms a complex composed of FOXO3, SIRT3, TFAM and POLRMT. Interacts with TFB1M and TFB2M. Interacts with CLPX; this enhances DNA-binding. Phosphorylation by PKA within the HMG box 1 impairs DNA binding and promotes degradation by the AAA+ Lon protease. As to expression, the mitochondrial isoform is widely expressed while the nuclear isoform is testis-specific.

The protein resides in the mitochondrion. Its subcellular location is the mitochondrion matrix. It localises to the mitochondrion nucleoid. It is found in the nucleus. Its function is as follows. Binds to the mitochondrial light strand promoter and functions in mitochondrial transcription regulation. Component of the mitochondrial transcription initiation complex, composed at least of TFB2M, TFAM and POLRMT that is required for basal transcription of mitochondrial DNA. In this complex, TFAM recruits POLRMT to a specific promoter whereas TFB2M induces structural changes in POLRMT to enable promoter opening and trapping of the DNA non-template strand. Required for accurate and efficient promoter recognition by the mitochondrial RNA polymerase. Promotes transcription initiation from the HSP1 and the light strand promoter by binding immediately upstream of transcriptional start sites. Is able to unwind DNA. Bends the mitochondrial light strand promoter DNA into a U-turn shape via its HMG boxes. Required for maintenance of normal levels of mitochondrial DNA. May play a role in organizing and compacting mitochondrial DNA. In terms of biological role, may also function as a transcriptional activator or may have a structural role in the compaction of nuclear DNA during spermatogenesis. The sequence is that of Transcription factor A, mitochondrial from Mus musculus (Mouse).